The chain runs to 75 residues: Small ribosomal subunit protein eS17 (75 aa).

Belongs to the eukaryotic ribosomal protein eS17 family.

The chain is Small ribosomal subunit protein eS17 from Thermoplasma volcanium (strain ATCC 51530 / DSM 4299 / JCM 9571 / NBRC 15438 / GSS1).